The chain runs to 415 residues: Multidrug resistance protein MdtA (415 aa).

The first 21 residues, 1 to 21 (MKGSYKSRWVIVIVVVIAAIA), serve as a signal peptide directing secretion. Disordered regions lie at residues 32 to 60 (SRSAAPGATKQAQQSPAGGRRGMRSGPLA) and 392 to 415 (EAQSATTPEEKATSREYAKKGARS). Residues 399–415 (PEEKATSREYAKKGARS) are compositionally biased toward basic and acidic residues.

This sequence belongs to the membrane fusion protein (MFP) (TC 8.A.1) family. Part of a tripartite efflux system composed of MdtA, MdtB and MdtC.

The protein localises to the cell inner membrane. Its function is as follows. The MdtABC tripartite complex confers resistance against novobiocin and deoxycholate. The chain is Multidrug resistance protein MdtA from Escherichia coli (strain 55989 / EAEC).